Consider the following 552-residue polypeptide: Rqc2 homolog RqcH (552 aa).

2 coiled-coil regions span residues 271–317 (RDRV…QKGE) and 357–398 (NAQR…MLGQ).

Belongs to the NEMF family. In terms of assembly, associates with stalled 50S ribosomal subunits, binds to RqcH. Recombinant protein interacts with the N-terminal 30 kDa of human fibronectin (FN1).

Its function is as follows. Key component of the ribosome quality control system (RQC), a ribosome-associated complex that mediates the extraction of incompletely synthesized nascent chains from stalled ribosomes and their subsequent degradation. RqcH recruits Ala-charged tRNA, and with RqcP directs the elongation of stalled nascent chains on 50S ribosomal subunits, leading to non-templated C-terminal alanine extensions (Ala tail). The Ala tail promotes nascent chain degradation. May add between 1 and at least 8 Ala residues. Binds to stalled 50S ribosomal subunits. This chain is Rqc2 homolog RqcH, found in Streptococcus suis (strain 05ZYH33).